The primary structure comprises 547 residues: DNA mismatch repair protein MutL (547 aa).

It belongs to the DNA mismatch repair MutL/HexB family.

Its function is as follows. This protein is involved in the repair of mismatches in DNA. It is required for dam-dependent methyl-directed DNA mismatch repair. May act as a 'molecular matchmaker', a protein that promotes the formation of a stable complex between two or more DNA-binding proteins in an ATP-dependent manner without itself being part of a final effector complex. The protein is DNA mismatch repair protein MutL of Deinococcus radiodurans (strain ATCC 13939 / DSM 20539 / JCM 16871 / CCUG 27074 / LMG 4051 / NBRC 15346 / NCIMB 9279 / VKM B-1422 / R1).